The primary structure comprises 336 residues: Type II methyltransferase M2.HphI (336 aa).

The protein belongs to the N(4)/N(6)-methyltransferase family.

It catalyses the reaction a 2'-deoxyadenosine in DNA + S-adenosyl-L-methionine = an N(6)-methyl-2'-deoxyadenosine in DNA + S-adenosyl-L-homocysteine + H(+). Its function is as follows. An alpha subtype methylase that recognizes the double-stranded sequence 5'-GGTGA-3', probably methylates A-5 on the top strand, and protects the DNA from cleavage by the HphI endonuclease. This chain is Type II methyltransferase M2.HphI (hphIBM), found in Haemophilus parahaemolyticus.